A 91-amino-acid chain; its full sequence is MFCVIYRSARREQTYLYVEKKDDFSRVPEELLAGFGQPIMTMMLPLDGRKKLANADLEKVKQALKDQGYYLQLPPPPENLLKQHLESIGKK.

Residues 1-85 form the YcgL domain; it reads MFCVIYRSAR…PPENLLKQHL (85 aa).

The polypeptide is YcgL domain-containing protein ESA_01460 (Cronobacter sakazakii (strain ATCC BAA-894) (Enterobacter sakazakii)).